Here is a 160-residue protein sequence, read N- to C-terminus: Probable small nuclear ribonucleoprotein-associated protein B (160 aa).

Residues 4 to 86 (SKNNKMMAHL…IVSMTVDGPP (83 aa)) form the Sm domain. The disordered stretch occupies residues 80 to 160 (MTVDGPPPRD…YGGPPGGRPF (81 aa)). Gly residues-rich tracts occupy residues 99-113 (GGAG…GGRG), 128-143 (APGG…GGPG), and 150-160 (GYGGPPGGRPF).

This sequence belongs to the snRNP SmB/SmN family.

It localises to the nucleus. The protein localises to the cytoplasm. The protein resides in the cytosol. Its function is as follows. Plays a role in pre-mRNA splicing as a core component of the spliceosomal U1, U2, U4 and U5 small nuclear ribonucleoproteins (snRNPs), the building blocks of the spliceosome. The polypeptide is Probable small nuclear ribonucleoprotein-associated protein B (snr-2) (Caenorhabditis elegans).